We begin with the raw amino-acid sequence, 115 residues long: MEKAYRIKKNADFQRIYKKGHSVANRQFVVYTCNNKEIDHFRLGISVSKKLGNAVLRNKIKRAIRENFKVHKSHILAKDIIVIARQPAKDMTTLQIQNSLEHVLKIAKVFNKKIK.

The protein belongs to the RnpA family. As to quaternary structure, consists of a catalytic RNA component (M1 or rnpB) and a protein subunit.

It catalyses the reaction Endonucleolytic cleavage of RNA, removing 5'-extranucleotides from tRNA precursor.. RNaseP catalyzes the removal of the 5'-leader sequence from pre-tRNA to produce the mature 5'-terminus. It can also cleave other RNA substrates such as 4.5S RNA. The protein component plays an auxiliary but essential role in vivo by binding to the 5'-leader sequence and broadening the substrate specificity of the ribozyme. This is Ribonuclease P protein component from Staphylococcus aureus (strain Mu3 / ATCC 700698).